The following is a 92-amino-acid chain: Small ribosomal subunit protein uS19 (92 aa).

It belongs to the universal ribosomal protein uS19 family.

Its function is as follows. Protein S19 forms a complex with S13 that binds strongly to the 16S ribosomal RNA. The protein is Small ribosomal subunit protein uS19 of Beijerinckia indica subsp. indica (strain ATCC 9039 / DSM 1715 / NCIMB 8712).